The following is a 106-amino-acid chain: Phosphoribosyl-ATP pyrophosphatase (106 aa).

It belongs to the PRA-PH family.

It localises to the cytoplasm. It catalyses the reaction 1-(5-phospho-beta-D-ribosyl)-ATP + H2O = 1-(5-phospho-beta-D-ribosyl)-5'-AMP + diphosphate + H(+). It participates in amino-acid biosynthesis; L-histidine biosynthesis; L-histidine from 5-phospho-alpha-D-ribose 1-diphosphate: step 2/9. The polypeptide is Phosphoribosyl-ATP pyrophosphatase (Rhizorhabdus wittichii (strain DSM 6014 / CCUG 31198 / JCM 15750 / NBRC 105917 / EY 4224 / RW1) (Sphingomonas wittichii)).